A 491-amino-acid polypeptide reads, in one-letter code: UDP-N-acetylmuramate--L-alanine ligase (491 aa).

126-132 (GTHGKTT) lines the ATP pocket.

It belongs to the MurCDEF family.

The protein localises to the cytoplasm. It catalyses the reaction UDP-N-acetyl-alpha-D-muramate + L-alanine + ATP = UDP-N-acetyl-alpha-D-muramoyl-L-alanine + ADP + phosphate + H(+). It functions in the pathway cell wall biogenesis; peptidoglycan biosynthesis. Cell wall formation. The chain is UDP-N-acetylmuramate--L-alanine ligase from Escherichia coli (strain K12 / MC4100 / BW2952).